The following is a 313-amino-acid chain: Serine/threonine-protein kinase SZE1 (313 aa).

A lipid anchor (N-myristoyl glycine) is attached at Gly2. Residues 43–311 enclose the Protein kinase domain; that stretch reads MELGESLGYI…EVLDNLNAIA (269 aa). ATP-binding positions include 49–57 and Lys71; that span reads LGYINPKTL.

This sequence belongs to the protein kinase superfamily. Ser/Thr protein kinase family. Component of an immune signaling complex made of, at least, SZE1, BKN2/SZE2, ZAR1 and ZED1. Interacts directly with ZED1, ZAR1 and Pseudomonas syringae HOPZ1A at the plasma membrane. In terms of processing, N-terminal myristoylation is critical for plasma membrane localization and implication in defense responses. Post-translationally, autophosphorylated. As to expression, expressed in roots, seedlings, rosette leaves, floral organs, siliques and inflorescence stems.

The protein localises to the cell membrane. The enzyme catalyses L-seryl-[protein] + ATP = O-phospho-L-seryl-[protein] + ADP + H(+). It catalyses the reaction L-threonyl-[protein] + ATP = O-phospho-L-threonyl-[protein] + ADP + H(+). Functionally, together with BKN2/SZE2 and ZED1, required for effector-triggered immunity (e.g. Pseudomonas syringae effector type III HopZ1a) via the activation of ZAR1, thus being essential for resistance against P.syringae pv. tomato DC3000 expressing HopZ1a. The polypeptide is Serine/threonine-protein kinase SZE1 (Arabidopsis thaliana (Mouse-ear cress)).